Consider the following 325-residue polypeptide: Beta-1,3-galactosyltransferase 6 (325 aa).

Topologically, residues 1–11 are cytoplasmic; that stretch reads MKVFRRAWRHR. Residues 12-30 form a helical; Signal-anchor for type II membrane protein membrane-spanning segment; that stretch reads VALGLGGLAFCGTTLLYLA. Residues 31 to 325 lie on the Lumenal side of the membrane; it reads RCASEGETPS…QCCQRKEGVP (295 aa). A glycan (N-linked (GlcNAc...) asparagine) is linked at asparagine 127.

The protein belongs to the glycosyltransferase 31 family. Mn(2+) serves as cofactor.

It is found in the golgi apparatus. The protein resides in the golgi stack membrane. The enzyme catalyses 3-O-(beta-D-galactosyl-(1-&gt;4)-beta-D-xylosyl)-L-seryl-[protein] + UDP-alpha-D-galactose = 3-O-(beta-D-galactosyl-(1-&gt;3)-beta-D-galactosyl-(1-&gt;4)-beta-D-xylosyl)-L-seryl-[protein] + UDP + H(+). The protein operates within glycan metabolism; chondroitin sulfate biosynthesis. It participates in glycan metabolism; heparan sulfate biosynthesis. Beta-1,3-galactosyltransferase that transfers galactose from UDP-galactose to substrates with a terminal beta-linked galactose residue. Has a preference for galactose-beta-1,4-xylose that is found in the linker region of glycosaminoglycans, such as heparan sulfate and chondroitin sulfate. Has no activity towards substrates with terminal glucosamine or galactosamine residues. The protein is Beta-1,3-galactosyltransferase 6 (B3galt6) of Mus musculus (Mouse).